Reading from the N-terminus, the 2250-residue chain is RNA1 polyprotein (2250 aa).

Low complexity predominate over residues 346-371 (SPTVTPSSTPSTSRSSSPEPRVSSPS). The interval 346–372 (SPTVTPSSTPSTSRSSSPEPRVSSPSG) is disordered. Residues 849–1020 (LRDAHNALSR…PHFHEFNLLA (172 aa)) enclose the SF3 helicase domain. The helical transmembrane segment at 1225 to 1245 (VALCAVLLVGYLIIKFAIFLF) threads the bilayer. Residue Ser1299 is modified to O-(5'-phospho-RNA)-serine. A Peptidase C3 domain is found at 1319–1532 (GPEEEPSQSL…YAQIVTLDDF (214 aa)). Active-site for picornain 3C-like protease activity residues include His1362, Asp1400, and Cys1495. In terms of domain architecture, RdRp catalytic spans 1814 to 1956 (TNWFNGDYSR…SVNDVITEKF (143 aa)).

This sequence belongs to the comoviridae genome polyprotein B family. In terms of processing, specific enzymatic cleavages by picornain 3C-like protease in vivo yield mature proteins. Picornain 3C-like protease is autocatalytically processed. Post-translationally, viral genome-linked protein (VPg) is uridylylated by the polymerase and is covalently linked to the 5'-end of genomic RNA. This uridylylated form acts as a nucleotide-peptide primer for the polymerase.

It localises to the host membrane. The catalysed reaction is RNA(n) + a ribonucleoside 5'-triphosphate = RNA(n+1) + diphosphate. Functionally, picornain 3C-like protease is a thiol protease that probably cleaves the B and M polyproteins. Viral genome-linked protein (VPg) plays a role in RNA replication. This chain is RNA1 polyprotein, found in Balsamorhiza sagittata (Apple).